The chain runs to 341 residues: S-adenosylmethionine:tRNA ribosyltransferase-isomerase (341 aa).

It belongs to the QueA family. As to quaternary structure, monomer.

It is found in the cytoplasm. It catalyses the reaction 7-aminomethyl-7-carbaguanosine(34) in tRNA + S-adenosyl-L-methionine = epoxyqueuosine(34) in tRNA + adenine + L-methionine + 2 H(+). It functions in the pathway tRNA modification; tRNA-queuosine biosynthesis. Transfers and isomerizes the ribose moiety from AdoMet to the 7-aminomethyl group of 7-deazaguanine (preQ1-tRNA) to give epoxyqueuosine (oQ-tRNA). This Clostridium botulinum (strain ATCC 19397 / Type A) protein is S-adenosylmethionine:tRNA ribosyltransferase-isomerase.